We begin with the raw amino-acid sequence, 337 residues long: Ribosomal RNA small subunit methyltransferase H (337 aa).

S-adenosyl-L-methionine contacts are provided by residues 36–38 (GGH), Asp-56, Phe-82, Asp-100, and Gln-107. Positions 314-337 (GLERRSGRIPNPRSPIPASQGDAR) are disordered.

It belongs to the methyltransferase superfamily. RsmH family.

The protein resides in the cytoplasm. It catalyses the reaction cytidine(1402) in 16S rRNA + S-adenosyl-L-methionine = N(4)-methylcytidine(1402) in 16S rRNA + S-adenosyl-L-homocysteine + H(+). In terms of biological role, specifically methylates the N4 position of cytidine in position 1402 (C1402) of 16S rRNA. This chain is Ribosomal RNA small subunit methyltransferase H, found in Xanthomonas oryzae pv. oryzae (strain PXO99A).